The chain runs to 237 residues: Chalcone--flavanone isomerase (237 aa).

2 residues coordinate substrate: Thr-50 and Ser-192.

It belongs to the chalcone isomerase family.

It carries out the reaction a chalcone = a flavanone.. It participates in secondary metabolite biosynthesis; flavonoid biosynthesis. Functionally, catalyzes the intramolecular cyclization of bicyclic chalcones into tricyclic (S)-flavanones. Responsible for the isomerization of 4,2',4',6'-tetrahydroxychalcone (also termed chalcone) into naringenin. This chain is Chalcone--flavanone isomerase (CHI), found in Callistephus chinensis (China aster).